Reading from the N-terminus, the 259-residue chain is Dihydroorotate dehydrogenase B (NAD(+)), electron transfer subunit (259 aa).

In terms of domain architecture, FAD-binding FR-type spans 1 to 101 (MKIEDCTVEE…MGPLGRGYDV (101 aa)). Residues 52 to 55 (RPIS), 69 to 71 (IYR), and 76 to 77 (GT) each bind FAD. The [2Fe-2S] cluster site is built by Cys223, Cys228, Cys231, and Cys245.

Belongs to the PyrK family. In terms of assembly, heterotetramer of 2 PyrK and 2 PyrD type B subunits. [2Fe-2S] cluster serves as cofactor. The cofactor is FAD.

It participates in pyrimidine metabolism; UMP biosynthesis via de novo pathway; orotate from (S)-dihydroorotate (NAD(+) route): step 1/1. Responsible for channeling the electrons from the oxidation of dihydroorotate from the FMN redox center in the PyrD type B subunit to the ultimate electron acceptor NAD(+). The protein is Dihydroorotate dehydrogenase B (NAD(+)), electron transfer subunit of Fusobacterium nucleatum subsp. nucleatum (strain ATCC 25586 / DSM 15643 / BCRC 10681 / CIP 101130 / JCM 8532 / KCTC 2640 / LMG 13131 / VPI 4355).